The chain runs to 379 residues: EP300-interacting inhibitor of differentiation 3 (379 aa).

Residues 32–58 (LKQVEEEEEVEALKVEVAAASDTESDT) are a coiled coil.

This sequence belongs to the NSE4 family. In terms of assembly, component of the SMC5-SMC6 complex which consists at least of SMC5, SMC6, NSMCE2, NSMCE1, NSMCE4A or EID3 and NSMCE3. NSMCE1, NSMCE4A or EID3 and NSMCE3 probably form a subcomplex that bridges the head domains of the SMC5:SMC6 heterodimer. Homodimer, and heterodimer with EID2. Interacts with the C-terminal region of CREBBP.

The protein resides in the nucleus. The protein localises to the cytoplasm. Its subcellular location is the chromosome. It is found in the telomere. In terms of biological role, tissue-specific component of the SMC5-SMC6 complex, a complex involved in repair of DNA double-strand breaks by homologous recombination. The complex may promote sister chromatid homologous recombination by recruiting the SMC1-SMC3 cohesin complex to double-strand breaks. The complex is required for telomere maintenance via recombination and mediates sumoylation of shelterin complex (telosome) components. Its function is as follows. Acts as a repressor of nuclear receptor-dependent transcription possibly by interfering with CREBBP-dependent coactivation. May function as a coinhibitor of other CREBBP/EP300-dependent transcription factors. This chain is EP300-interacting inhibitor of differentiation 3, found in Bos taurus (Bovine).